We begin with the raw amino-acid sequence, 906 residues long: MAVPDQKSPNVLLQNLCCRILGKGEADVAQQFQYAVRVIGSNFAPTVERDEFLVTEKIKKEFVRQRREADGALFSELHRKLQSQGVLKNRWSILYLLLSLSEDPRKQPNKTSSFAALFAQALPRDAHSTPYYYARPQSLPLSYQDRNVQCAQNAASIGSSGISSIGMYALNGPTPQSIIQGQSNQTPNMGDALRQQLGSRLAWTLAAGQQPSQQSTTTKGLPNTVSRNVPRTRREGDSSGSVEITETSLVRDLLYVFQGIDGKFVKMCNSENCYKVDGKVAVSKSLKDITSKLSELGWLHNKIKKYTDQRSLDRAFGLVGQSFCAALHQELKEYYRLLSVLHSQLQVEDDQGVNLGVESSLTLRRLLVWTFDPKIRLKTLAALVDHCQGRKGGELASAVHAYTKTGDPYMRSLVQHILGLVAYPILNFLYRWIYDGELEDTYHEFFVASDPVVKTDRLWHDKYSLRKSMIPSFMTMDQSRKVLLIGKSINFLHQVCHDQTPASKAMAVGKSAESPKDAAELFTDLENAFQTKIDAAYFDTSKYLLDVLNKNYNLLEHMQAMRRYLLLGQGDFIRHLMDLLKPELVRPATTLYQHNLTGILETAVRATNAQFDNPEILKRLDVRLLEVSPGDTGWDVFSLDYHVDGPIATVFTRECMSHYLRVFNFLWRAKRMEYILTDIWKGHMCNAKLLKGMPELSGVLHQCHILASEMVHFIHQMQYYITFEVLECSWDELWNKVLKAQDLDHIIAAHDVFLDTIISRCLLDSESRALLNQLRAVFDQIIEFQNAQDALYRAALEELQQRLQFEERKKERESEGEWGVTAAEEDVENKRIQEFQESIPKMRSQLRILTHFYQGIVQQFLVLLTTSTDESLRFLSFRLDFNEHYKAREPRLRVSMGTRGRRSFHV.

Positions glycine 208–valine 229 are enriched in polar residues. The tract at residues glycine 208–valine 242 is disordered.

Belongs to the TUBGCP family. In terms of assembly, interacts with gamma-tubulin.

It is found in the cytoplasm. It localises to the cytoskeleton. Its subcellular location is the microtubule organizing center. The protein resides in the centrosome. In terms of biological role, necessary for the recruitment of gamma-tubulin to the centrosome and for the formation of a functional centrosome. This Xenopus laevis (African clawed frog) protein is Gamma-tubulin complex component 3 homolog (tubgcp3).